A 48-amino-acid polypeptide reads, in one-letter code: Large ribosomal subunit protein uL14 (48 aa).

It belongs to the universal ribosomal protein uL14 family.

This chain is Large ribosomal subunit protein uL14 (RPL23), found in Onchocerca volvulus.